The chain runs to 472 residues: 3-isopropylmalate dehydratase large subunit (472 aa).

The [4Fe-4S] cluster site is built by Cys-347, Cys-407, and Cys-410.

The protein belongs to the aconitase/IPM isomerase family. LeuC type 1 subfamily. As to quaternary structure, heterodimer of LeuC and LeuD. It depends on [4Fe-4S] cluster as a cofactor.

It carries out the reaction (2R,3S)-3-isopropylmalate = (2S)-2-isopropylmalate. The protein operates within amino-acid biosynthesis; L-leucine biosynthesis; L-leucine from 3-methyl-2-oxobutanoate: step 2/4. Catalyzes the isomerization between 2-isopropylmalate and 3-isopropylmalate, via the formation of 2-isopropylmaleate. This chain is 3-isopropylmalate dehydratase large subunit, found in Bacillus licheniformis (strain ATCC 14580 / DSM 13 / JCM 2505 / CCUG 7422 / NBRC 12200 / NCIMB 9375 / NCTC 10341 / NRRL NRS-1264 / Gibson 46).